Reading from the N-terminus, the 393-residue chain is Cyclin CCL1 (393 aa).

Polar residues predominate over residues M1–M19. 2 disordered regions span residues M1 to D45 and S289 to Y325. 2 stretches are compositionally biased toward basic and acidic residues: residues A21 to N35 and N300 to E321.

The protein belongs to the cyclin family. Cyclin C subfamily. As to quaternary structure, CCL1 and KIN28 form the TFIIK complex, a component of TFIIH holo complex. Component of a complex consisting of KIN28, CCL1 and TFB3.

Regulatory component of the TFIIK complex (KIN28-CCL1 dimer) which is the protein kinase component of transcription factor IIH (TFIIH) and phosphorylates the C-terminal domain of RNA polymerase II during transition from transcription to elongation after preinitiation complex (PIC) formation, thereby positively regulating transcription. TFIIH (or factor B) is essential for both basal and activated transcription, and is involved in nucleotide excision repair (NER) of damaged DNA. TFIIH has DNA-dependent ATPase activity and is essential for polymerase II transcription in vitro. The protein is Cyclin CCL1 (CCL1) of Saccharomyces cerevisiae (strain ATCC 204508 / S288c) (Baker's yeast).